The chain runs to 346 residues: tRNA N6-adenosine threonylcarbamoyltransferase (346 aa).

The Fe cation site is built by histidine 109, histidine 113, and tyrosine 135. Substrate is bound by residues 135 to 139, aspartate 167, glycine 180, glutamate 184, and asparagine 263; that span reads YVSGG. Aspartate 291 contributes to the Fe cation binding site.

Belongs to the KAE1 / TsaD family. As to quaternary structure, monomer. Component of the KEOPS complex that consists of Kae1, Bud32, Cgi121 and Pcc1; the whole complex dimerizes. Requires Fe(2+) as cofactor.

Its subcellular location is the cytoplasm. The enzyme catalyses L-threonylcarbamoyladenylate + adenosine(37) in tRNA = N(6)-L-threonylcarbamoyladenosine(37) in tRNA + AMP + H(+). In terms of biological role, required for the formation of a threonylcarbamoyl group on adenosine at position 37 (t(6)A37) in tRNAs that read codons beginning with adenine. Is a component of the KEOPS complex that is probably involved in the transfer of the threonylcarbamoyl moiety of threonylcarbamoyl-AMP (TC-AMP) to the N6 group of A37. Kae1 likely plays a direct catalytic role in this reaction, but requires other protein(s) of the complex to fulfill this activity. The polypeptide is tRNA N6-adenosine threonylcarbamoyltransferase (Methanopyrus kandleri (strain AV19 / DSM 6324 / JCM 9639 / NBRC 100938)).